The chain runs to 332 residues: tRNA dimethylallyltransferase (332 aa).

30–37 (GPTAVGKT) lines the ATP pocket. Position 32-37 (32-37 (TAVGKT)) interacts with substrate. The tract at residues 57–60 (DSMQ) is interaction with substrate tRNA.

The protein belongs to the IPP transferase family. As to quaternary structure, monomer. Requires Mg(2+) as cofactor.

It catalyses the reaction adenosine(37) in tRNA + dimethylallyl diphosphate = N(6)-dimethylallyladenosine(37) in tRNA + diphosphate. In terms of biological role, catalyzes the transfer of a dimethylallyl group onto the adenine at position 37 in tRNAs that read codons beginning with uridine, leading to the formation of N6-(dimethylallyl)adenosine (i(6)A). This is tRNA dimethylallyltransferase from Natranaerobius thermophilus (strain ATCC BAA-1301 / DSM 18059 / JW/NM-WN-LF).